The chain runs to 141 residues: Nucleoside diphosphate kinase (141 aa).

ATP is bound by residues Lys11, Phe59, Arg87, Thr93, Arg104, and Asn114. His117 (pros-phosphohistidine intermediate) is an active-site residue.

The protein belongs to the NDK family. In terms of assembly, homotetramer. Mg(2+) serves as cofactor.

The protein localises to the cytoplasm. The enzyme catalyses a 2'-deoxyribonucleoside 5'-diphosphate + ATP = a 2'-deoxyribonucleoside 5'-triphosphate + ADP. It catalyses the reaction a ribonucleoside 5'-diphosphate + ATP = a ribonucleoside 5'-triphosphate + ADP. Functionally, major role in the synthesis of nucleoside triphosphates other than ATP. The ATP gamma phosphate is transferred to the NDP beta phosphate via a ping-pong mechanism, using a phosphorylated active-site intermediate. The polypeptide is Nucleoside diphosphate kinase (Legionella pneumophila (strain Paris)).